A 303-amino-acid polypeptide reads, in one-letter code: MTTPEYGSLRSDDDHWDIVSNVGYTALLVAGWRALHTTGPKPLVQDEYAKHFITASADPYLEGLLANPRTSEDGTAFPRLYGVQTRFFDDFFNCADEAGIRQAVIVAAGLDCRAYRLDWQPGTTVFEIDVPKVLEFKARVLSERGAVPKAHRVAVPADLRTDWPTPLTAAGFDPQRPSAWSVEGLLPYLTGDAQYALFARIDELCAPGSRVALGALGSRLDHEQLAALETAHPGVNMSGDVNFSALTYDDKTDPVEWLVEHGWAVDPVRSTLELQVGYGLTPPDVDVKIDSFMRSQYITAVRA.

Residues Asp129 and 158–159 (DL) contribute to the S-adenosyl-L-methionine site.

This sequence belongs to the UPF0677 family.

In terms of biological role, exhibits S-adenosyl-L-methionine-dependent methyltransferase activity. The protein is Putative S-adenosyl-L-methionine-dependent methyltransferase Mb1931c of Mycobacterium bovis (strain ATCC BAA-935 / AF2122/97).